Consider the following 389-residue polypeptide: Chalcone synthase 3 (389 aa).

The active site involves Cys164.

It belongs to the thiolase-like superfamily. Chalcone/stilbene synthases family.

It catalyses the reaction (E)-4-coumaroyl-CoA + 3 malonyl-CoA + 3 H(+) = 2',4,4',6'-tetrahydroxychalcone + 3 CO2 + 4 CoA. It functions in the pathway secondary metabolite biosynthesis; flavonoid biosynthesis. Its function is as follows. The primary product of this enzyme is 4,2',4',6'-tetrahydroxychalcone (also termed naringenin-chalcone or chalcone) which can under specific conditions spontaneously isomerize into naringenin. In Camellia sinensis (Tea plant), this protein is Chalcone synthase 3 (CHS3).